The primary structure comprises 1029 residues: Translation initiation factor IF-2 (1029 aa).

The interval 73 to 441 is disordered; that stretch reads RELRSEEDDG…RQRRRERKRE (369 aa). Composition is skewed to acidic residues over residues 106-121 and 148-177; these read TAEEAAEPAVADDEEE and AEAEPSGDEASAEASADDAPADEAPTDEAE. Positions 183–196 are enriched in basic and acidic residues; it reads AADKDAAAIADEQK. Acidic residues-rich tracts occupy residues 213–234, 242–258, and 279–322; these read TGEETSDTDAATEADATDDAEA, TEAEPETPADETEAEDV, and APDE…DEEG. The span at 358–372 shows a compositional bias: basic and acidic residues; that stretch reads KDKDKDKSSKKDKKD. Residues 373 to 386 are compositionally biased toward basic residues; the sequence is KSNKKSKSKGKKQK. The segment covering 400–411 has biased composition (low complexity); the sequence is QTLQETLQELEQ. The span at 417-427 shows a compositional bias: basic residues; the sequence is RQRRRRRRRKR. Basic and acidic residues predominate over residues 428–441; it reads HEEERQRRRERKRE. A tr-type G domain is found at 524–696; the sequence is PRAPVVTVMG…LLQSEIMELK (173 aa). The segment at 533–540 is G1; sequence GHVDHGKT. 533–540 is a binding site for GTP; the sequence is GHVDHGKT. A G2 region spans residues 558–562; the sequence is GITQH. The tract at residues 582 to 585 is G3; it reads DTPG. Residues 582–586 and 636–639 contribute to the GTP site; these read DTPGH and NKMD. Positions 636 to 639 are G4; it reads NKMD. The interval 672 to 674 is G5; that stretch reads SAK.

The protein belongs to the TRAFAC class translation factor GTPase superfamily. Classic translation factor GTPase family. IF-2 subfamily.

It localises to the cytoplasm. In terms of biological role, one of the essential components for the initiation of protein synthesis. Protects formylmethionyl-tRNA from spontaneous hydrolysis and promotes its binding to the 30S ribosomal subunits. Also involved in the hydrolysis of GTP during the formation of the 70S ribosomal complex. The protein is Translation initiation factor IF-2 of Salinibacter ruber (strain DSM 13855 / M31).